The following is a 244-amino-acid chain: tRNA (guanine-N(1)-)-methyltransferase (244 aa).

S-adenosyl-L-methionine-binding positions include G113 and 133–138 (IGDYVL).

This sequence belongs to the RNA methyltransferase TrmD family. In terms of assembly, homodimer.

Its subcellular location is the cytoplasm. It carries out the reaction guanosine(37) in tRNA + S-adenosyl-L-methionine = N(1)-methylguanosine(37) in tRNA + S-adenosyl-L-homocysteine + H(+). Specifically methylates guanosine-37 in various tRNAs. The sequence is that of tRNA (guanine-N(1)-)-methyltransferase from Bacillus cereus (strain B4264).